We begin with the raw amino-acid sequence, 238 residues long: MQIKTKAIVISAIKYQEKSLIVKCFTLSDGLKSYFVRDAFSSKKSNQKIAYFQPLTILEIEAVHKNKGTLERFKEVKIATPFHSIHYDVIKSTIVIFISEILHHSIHEEEKNEAFFTFLETALHWLDNHDQIANFHLILLLETTKYLGFYPDISNTEHPFFEMTEGLFSPFHAISSLTEHETNLFKKLIDLKFDNSNTNTLHSTERQILLKILINYYSYHLDGFKKPKSLEVLKEVFS.

Belongs to the RecO family.

Its function is as follows. Involved in DNA repair and RecF pathway recombination. This is DNA repair protein RecO from Flavobacterium psychrophilum (strain ATCC 49511 / DSM 21280 / CIP 103535 / JIP02/86).